The primary structure comprises 117 residues: Large ribosomal subunit protein bL19 (117 aa).

This sequence belongs to the bacterial ribosomal protein bL19 family.

This protein is located at the 30S-50S ribosomal subunit interface and may play a role in the structure and function of the aminoacyl-tRNA binding site. The sequence is that of Large ribosomal subunit protein bL19 from Cutibacterium acnes (strain DSM 16379 / KPA171202) (Propionibacterium acnes).